The following is a 137-amino-acid chain: Probable 4-amino-4-deoxy-L-arabinose-phosphoundecaprenol flippase subunit ArnF (137 aa).

Over 1–5 (MNVPR) the chain is Cytoplasmic. The helical transmembrane segment at 6–26 (GWLAALGSVLLVSAAQLGMRW) threads the bilayer. At 27–44 (GMSRLPLPEAWAGQTPEH) the chain is on the periplasmic side. Residues 45 to 65 (AALLAVALAVAAYAASLLCWL) traverse the membrane as a helical segment. The Cytoplasmic segment spans residues 66 to 76 (AALRHLPLGRA). A helical membrane pass occupies residues 77 to 97 (YSLLSASYALVYLLAASLPAF). At 98-100 (EET) the chain is on the periplasmic side. The chain crosses the membrane as a helical span at residues 101-121 (FTTGKTLGVGLVVLGVLTVNA). Residues 122–137 (RRTAAAPAHHPSRKAL) lie on the Cytoplasmic side of the membrane.

The protein belongs to the ArnF family. Heterodimer of ArnE and ArnF.

It is found in the cell inner membrane. It functions in the pathway bacterial outer membrane biogenesis; lipopolysaccharide biosynthesis. In terms of biological role, translocates 4-amino-4-deoxy-L-arabinose-phosphoundecaprenol (alpha-L-Ara4N-phosphoundecaprenol) from the cytoplasmic to the periplasmic side of the inner membrane. The protein is Probable 4-amino-4-deoxy-L-arabinose-phosphoundecaprenol flippase subunit ArnF of Pseudomonas paraeruginosa (strain DSM 24068 / PA7) (Pseudomonas aeruginosa (strain PA7)).